We begin with the raw amino-acid sequence, 379 residues long: MAEILMGVGNAGLKESGNPDILVVYLPYPCTASFVFTDNYFKAGSVIYSERIARDKERIRAFVVNSGNANCGTGEEGIKHAEMMAEKVAQILDIPKDEVFVFSTGIIGKYLPIENVLKGIEQACSNLELLDLKRASEVISTTDRFPKYDFAKAGEVETFGFAKGAGMIHPSMATMLAFVFTNANLEYLTLKRIHESVTEKTFNSITVDGCESTNDAFGIISLGEVEADPETVEFELLKVSESLAKQIVADGEGATKIIRVNVRSAITEIKAREIAEAIANSLLVKTAVFGRDPNWGRIAAAAGSTEFPIDPFKLEIYVGGYLLYDGKPHDENLEKAKKHLIEDREVDITVELNEGEYEWVCYSSDIGYDYIKLNAEYTT.

Substrate is bound by residues threonine 141, lysine 163, threonine 174, glutamate 252, asparagine 374, and threonine 379. The active-site Nucleophile is the threonine 174.

The protein belongs to the ArgJ family. Heterotetramer of two alpha and two beta chains.

The protein resides in the cytoplasm. The catalysed reaction is N(2)-acetyl-L-ornithine + L-glutamate = N-acetyl-L-glutamate + L-ornithine. It catalyses the reaction L-glutamate + acetyl-CoA = N-acetyl-L-glutamate + CoA + H(+). It participates in amino-acid biosynthesis; L-arginine biosynthesis; L-ornithine and N-acetyl-L-glutamate from L-glutamate and N(2)-acetyl-L-ornithine (cyclic): step 1/1. Its pathway is amino-acid biosynthesis; L-arginine biosynthesis; N(2)-acetyl-L-ornithine from L-glutamate: step 1/4. Its function is as follows. Catalyzes two activities which are involved in the cyclic version of arginine biosynthesis: the synthesis of N-acetylglutamate from glutamate and acetyl-CoA as the acetyl donor, and of ornithine by transacetylation between N(2)-acetylornithine and glutamate. In Aquifex aeolicus (strain VF5), this protein is Arginine biosynthesis bifunctional protein ArgJ.